Reading from the N-terminus, the 548-residue chain is MAAKEVKFGDSARKKMLTGVNVLADAVKATLGPKGRNVIIEKSFGAPTITKDGVSVAKEIELEDRFENMGAQLVKDVASRANDDAGDGTTTATVLAQAIVNEGYKAVAAGMNPMDLKRGIDKATIAIVAELKNLSKPCADTKAIAQVGTISANSDSSIGDIIAEAMEKVGKEGVITVEEGTGLENELSVVEGMQFDRGYLSPYFVNKPETMVAELDSPLILLVDKKISNIREMLPVLEAVAKAGRPLLIVSEDVEGEALATLVVNNMRGIVKVAAVKAPGFGDRRKAMLQDIAVLTGGTVISEEIGLSLESATLENLGSAKRVTISKENTIIVDGAGVEQDIQARITQIRAQVAETSSDYDREKLQERLAKLSGGVAVIKVGAGSEVEMKEKKARVEDALHATRAAVEEGVVPGGGVALIRALEALTNLTGDNADQNVGIAVLRRAVEAPLRQIAANSGDEPSVVVNEVKNGKGNYGYNAATGVYGDMIEMGILDPTKVTRSALQAAASIGGLILTTEAAIADKPKAEGAGGGGMPDMGGMGGMGGMM.

ATP-binding positions include 30-33 (TLGP), Lys-51, 87-91 (DGTTT), Gly-415, 479-481 (NAA), and Asp-495.

The protein belongs to the chaperonin (HSP60) family. In terms of assembly, forms a cylinder of 14 subunits composed of two heptameric rings stacked back-to-back. Interacts with the co-chaperonin GroES.

It is found in the cytoplasm. The catalysed reaction is ATP + H2O + a folded polypeptide = ADP + phosphate + an unfolded polypeptide.. Its function is as follows. Together with its co-chaperonin GroES, plays an essential role in assisting protein folding. The GroEL-GroES system forms a nano-cage that allows encapsulation of the non-native substrate proteins and provides a physical environment optimized to promote and accelerate protein folding. The chain is Chaperonin GroEL from Pseudomonas fluorescens (strain SBW25).